A 627-amino-acid chain; its full sequence is uncharacterized protein (627 aa).

Disordered stretches follow at residues 441–466 (EAVP…QGEN) and 608–627 (DLRG…TEDR). Residues 615-627 (DYERGKGESTEDR) are compositionally biased toward basic and acidic residues.

This is an uncharacterized protein from Homo sapiens (Human).